A 514-amino-acid chain; its full sequence is Alpha-1,3/1,6-mannosyltransferase ALG2 (514 aa).

N-linked (GlcNAc...) asparagine glycosylation occurs at asparagine 94. The next 2 helical transmembrane spans lie at 443-463 and 468-490; these read WAVM…HVFG and YIYL…IFWV.

It belongs to the glycosyltransferase group 1 family.

It localises to the endoplasmic reticulum membrane. The catalysed reaction is a beta-D-Man-(1-&gt;4)-beta-D-GlcNAc-(1-&gt;4)-alpha-D-GlcNAc-diphospho-di-trans,poly-cis-dolichol + GDP-alpha-D-mannose = an alpha-D-Man-(1-&gt;3)-beta-D-Man-(1-&gt;4)-beta-D-GlcNAc-(1-&gt;4)-alpha-D-GlcNAc-diphospho-di-trans,poly-cis-dolichol + GDP + H(+). The enzyme catalyses an alpha-D-Man-(1-&gt;3)-beta-D-Man-(1-&gt;4)-beta-D-GlcNAc-(1-&gt;4)-alpha-D-GlcNAc-diphospho-di-trans,poly-cis-dolichol + GDP-alpha-D-mannose = an alpha-D-Man-(1-&gt;3)-[alpha-D-Man-(1-&gt;6)]-beta-D-Man-(1-&gt;4)-beta-D-GlcNAc-(1-&gt;4)-alpha-D-GlcNAc-diphospho-di-trans,poly-cis-dolichol + GDP + H(+). The protein operates within protein modification; protein glycosylation. Functionally, mannosylates Man(2)GlcNAc(2)-dolichol diphosphate and Man(1)GlcNAc(2)-dolichol diphosphate to form Man(3)GlcNAc(2)-dolichol diphosphate. In Eremothecium gossypii (strain ATCC 10895 / CBS 109.51 / FGSC 9923 / NRRL Y-1056) (Yeast), this protein is Alpha-1,3/1,6-mannosyltransferase ALG2 (ALG2).